Reading from the N-terminus, the 941-residue chain is Protein translocase subunit SecA (941 aa).

ATP is bound by residues Q87, 105-109 (GEGKT), and D524. The tract at residues 871–919 (DEQPPMPAMEAHKLDPNTGEDQVAQAQSGLAPVAPAKRDPANPATWGKV) is disordered. Zn(2+) contacts are provided by C925, C927, C936, and H937.

Belongs to the SecA family. In terms of assembly, monomer and homodimer. Part of the essential Sec protein translocation apparatus which comprises SecA, SecYEG and auxiliary proteins SecDF-YajC and YidC. Requires Zn(2+) as cofactor.

It is found in the cell inner membrane. It localises to the cytoplasm. It catalyses the reaction ATP + H2O + cellular proteinSide 1 = ADP + phosphate + cellular proteinSide 2.. Part of the Sec protein translocase complex. Interacts with the SecYEG preprotein conducting channel. Has a central role in coupling the hydrolysis of ATP to the transfer of proteins into and across the cell membrane, serving both as a receptor for the preprotein-SecB complex and as an ATP-driven molecular motor driving the stepwise translocation of polypeptide chains across the membrane. The sequence is that of Protein translocase subunit SecA from Afipia carboxidovorans (strain ATCC 49405 / DSM 1227 / KCTC 32145 / OM5) (Oligotropha carboxidovorans).